A 437-amino-acid chain; its full sequence is Probable N-acetylmuramidase (437 aa).

Positions 1-57 (MPVSRVKVKNRHLKKKTKKPLAFYKPTTKFVGAVLIAGTLTTTHELLLQQTSPMVQA) are cleaved as a signal peptide. Disordered stretches follow at residues 217-244 (SSAG…SSTT), 291-319 (SSTN…ASQT), and 367-392 (ATSN…NSNA). In terms of domain architecture, LysM 1 spans 243–286 (TTYTVKSGDTLWGISQRYGISVAQIQSANNLKSTIIYIGQKLLL). Positions 291-317 (SSTNSGGSNNSASTTPTTSVTPAKPAS) are enriched in low complexity. The LysM 2 domain occupies 319–362 (TSVKVKSGDTLWALSVKYKTSIAQLKSWNHLSSDTIYIGQNLIV). The LysM 3 domain maps to 393 to 436 (SIHKVVKGDTLWGLSQKSGSPIASIKAWNHLSSDTILIGQYLRI).

It belongs to the glycosyl hydrolase 73 family.

The protein resides in the secreted. It carries out the reaction Hydrolysis of (1-&gt;4)-beta-linkages between N-acetylmuramic acid and N-acetyl-D-glucosamine residues in a peptidoglycan and between N-acetyl-D-glucosamine residues in chitodextrins.. Hydrolyzes the cell wall of L.lactis and M.lysodeikticus. Required for cell separation during growth. This chain is Probable N-acetylmuramidase (acmA), found in Lactococcus lactis subsp. cremoris (Streptococcus cremoris).